A 280-amino-acid polypeptide reads, in one-letter code: Pantothenate synthetase (280 aa).

30–37 is a binding site for ATP; that stretch reads MGYLHEGH. His-37 serves as the catalytic Proton donor. (R)-pantoate is bound at residue Gln-61. Position 61 (Gln-61) interacts with beta-alanine. 147–150 is a binding site for ATP; that stretch reads GQKD. Gln-153 lines the (R)-pantoate pocket. ATP is bound by residues Val-176 and 184 to 187; that span reads MSSR.

Belongs to the pantothenate synthetase family. As to quaternary structure, homodimer.

The protein localises to the cytoplasm. The catalysed reaction is (R)-pantoate + beta-alanine + ATP = (R)-pantothenate + AMP + diphosphate + H(+). The protein operates within cofactor biosynthesis; (R)-pantothenate biosynthesis; (R)-pantothenate from (R)-pantoate and beta-alanine: step 1/1. Catalyzes the condensation of pantoate with beta-alanine in an ATP-dependent reaction via a pantoyl-adenylate intermediate. This chain is Pantothenate synthetase, found in Thermosipho melanesiensis (strain DSM 12029 / CIP 104789 / BI429).